Here is a 441-residue protein sequence, read N- to C-terminus: Zinc finger and BTB domain-containing protein 26 (441 aa).

The region spanning 33–97 is the BTB domain; it reads CDVTVLIDDI…CYSGVLEFPE (65 aa). Residues 134 to 177 form a disordered region; sequence DSKEGCEPQSASPQSKEQQGDARGSPKQDSPCIHPSEDSMDMED. A Glycyl lysine isopeptide (Lys-Gly) (interchain with G-Cter in SUMO2) cross-link involves residue Lys184. Residues 194–216 form a disordered region; it reads VRSKKDQNQFISSEPTALHSSEP. Positions 201 to 216 are enriched in polar residues; that stretch reads NQFISSEPTALHSSEP. Lys255 is covalently cross-linked (Glycyl lysine isopeptide (Lys-Gly) (interchain with G-Cter in SUMO2)). C2H2-type zinc fingers lie at residues 273–295, 298–320, 326–348, and 354–377; these read HQCP…LKMH, FMCL…MRVH, FQCK…LNLH, and HKCN…KQLH. Lys329 participates in a covalent cross-link: Glycyl lysine isopeptide (Lys-Gly) (interchain with G-Cter in SUMO2).

In terms of tissue distribution, ubiquitous.

Its subcellular location is the nucleus. Its function is as follows. May be involved in transcriptional regulation. The polypeptide is Zinc finger and BTB domain-containing protein 26 (ZBTB26) (Homo sapiens (Human)).